The primary structure comprises 402 residues: 4-hydroxy-3-methylbut-2-enyl diphosphate reductase (402 aa).

Cysteine 66 lines the [4Fe-4S] cluster pocket. Histidine 96 is a binding site for (2E)-4-hydroxy-3-methylbut-2-enyl diphosphate. Residue histidine 96 coordinates dimethylallyl diphosphate. Histidine 96 is an isopentenyl diphosphate binding site. A [4Fe-4S] cluster-binding site is contributed by cysteine 157. Histidine 185 is a binding site for (2E)-4-hydroxy-3-methylbut-2-enyl diphosphate. A dimethylallyl diphosphate-binding site is contributed by histidine 185. Histidine 185 provides a ligand contact to isopentenyl diphosphate. The active-site Proton donor is the glutamate 187. A (2E)-4-hydroxy-3-methylbut-2-enyl diphosphate-binding site is contributed by threonine 250. Cysteine 288 contributes to the [4Fe-4S] cluster binding site. The (2E)-4-hydroxy-3-methylbut-2-enyl diphosphate site is built by serine 317, serine 318, asparagine 319, and serine 379. Residues serine 317, serine 318, asparagine 319, and serine 379 each contribute to the dimethylallyl diphosphate site. 4 residues coordinate isopentenyl diphosphate: serine 317, serine 318, asparagine 319, and serine 379.

The protein belongs to the IspH family. The cofactor is [4Fe-4S] cluster.

It catalyses the reaction isopentenyl diphosphate + 2 oxidized [2Fe-2S]-[ferredoxin] + H2O = (2E)-4-hydroxy-3-methylbut-2-enyl diphosphate + 2 reduced [2Fe-2S]-[ferredoxin] + 2 H(+). The catalysed reaction is dimethylallyl diphosphate + 2 oxidized [2Fe-2S]-[ferredoxin] + H2O = (2E)-4-hydroxy-3-methylbut-2-enyl diphosphate + 2 reduced [2Fe-2S]-[ferredoxin] + 2 H(+). It functions in the pathway isoprenoid biosynthesis; dimethylallyl diphosphate biosynthesis; dimethylallyl diphosphate from (2E)-4-hydroxy-3-methylbutenyl diphosphate: step 1/1. The protein operates within isoprenoid biosynthesis; isopentenyl diphosphate biosynthesis via DXP pathway; isopentenyl diphosphate from 1-deoxy-D-xylulose 5-phosphate: step 6/6. Catalyzes the conversion of 1-hydroxy-2-methyl-2-(E)-butenyl 4-diphosphate (HMBPP) into a mixture of isopentenyl diphosphate (IPP) and dimethylallyl diphosphate (DMAPP). Acts in the terminal step of the DOXP/MEP pathway for isoprenoid precursor biosynthesis. This is 4-hydroxy-3-methylbut-2-enyl diphosphate reductase from Nostoc sp. (strain PCC 7120 / SAG 25.82 / UTEX 2576).